A 625-amino-acid polypeptide reads, in one-letter code: tRNA uridine 5-carboxymethylaminomethyl modification enzyme MnmG (625 aa).

FAD-binding positions include 16–21 (GGGHAG), isoleucine 128, and serine 183. 275-289 (GPRYCPSIEDKVVRF) is a binding site for NAD(+). Glutamine 372 is an FAD binding site.

Belongs to the MnmG family. As to quaternary structure, homodimer. Heterotetramer of two MnmE and two MnmG subunits. FAD is required as a cofactor.

The protein localises to the cytoplasm. NAD-binding protein involved in the addition of a carboxymethylaminomethyl (cmnm) group at the wobble position (U34) of certain tRNAs, forming tRNA-cmnm(5)s(2)U34. The polypeptide is tRNA uridine 5-carboxymethylaminomethyl modification enzyme MnmG (Protochlamydia amoebophila (strain UWE25)).